We begin with the raw amino-acid sequence, 118 residues long: Large ribosomal subunit protein bL20 (118 aa).

Belongs to the bacterial ribosomal protein bL20 family.

Its function is as follows. Binds directly to 23S ribosomal RNA and is necessary for the in vitro assembly process of the 50S ribosomal subunit. It is not involved in the protein synthesizing functions of that subunit. In Campylobacter concisus (strain 13826), this protein is Large ribosomal subunit protein bL20.